A 1479-amino-acid chain; its full sequence is Type VII secretion system protein EssC (1479 aa).

Residues 1–229 (MHKLIIKYNK…RPPQPIQKNN (229 aa)) lie on the Cytoplasmic side of the membrane. Residues 230-252 (TVIWRSIIPPLVMIALTVVIFLV) form a helical membrane-spanning segment. Residues 253 to 256 (RPIG) lie on the Extracellular side of the membrane. A helical membrane pass occupies residues 257 to 279 (IYILMMIGMSTVTIVFGITTYFS). The Cytoplasmic portion of the chain corresponds to 280-1479 (EKKKYNKDVE…QAYQKIRWFK (1200 aa)). FtsK domains follow at residues 652-846 (DDIL…QDSN) and 997-1183 (QGPM…SEVS). Residues 672 to 679 (GTTGSGKS) and 1014 to 1021 (GSPGYGRT) contribute to the ATP site.

The protein belongs to the EssC family. As to quaternary structure, homooligomer. Interacts with EsaE.

The protein resides in the cell membrane. Functionally, component of the type VII secretion system (Ess). Required for the secretion of substrates including EsxA and EsxB. However, unable to support secretion of the substrate protein EsxC. This chain is Type VII secretion system protein EssC, found in Staphylococcus aureus (strain Mu50 / ATCC 700699).